A 704-amino-acid polypeptide reads, in one-letter code: Polyribonucleotide nucleotidyltransferase (704 aa).

2 residues coordinate Mg(2+): Asp-491 and Asp-497. Residues 558 to 617 form the KH domain; the sequence is PNYAVIEINSDKIRDVIGKGGATIRQLTEDTGAVIDIDDNGTIRIFGENKAATKEAIRQI. The 69-residue stretch at 627 to 695 folds into the S1 motif domain; the sequence is GKVYKGTVAR…NRGRIKLTMK (69 aa).

The protein belongs to the polyribonucleotide nucleotidyltransferase family. In terms of assembly, component of the RNA degradosome, which is a multiprotein complex involved in RNA processing and mRNA degradation. Mg(2+) is required as a cofactor.

Its subcellular location is the cytoplasm. It catalyses the reaction RNA(n+1) + phosphate = RNA(n) + a ribonucleoside 5'-diphosphate. Its function is as follows. Involved in mRNA degradation. Catalyzes the phosphorolysis of single-stranded polyribonucleotides processively in the 3'- to 5'-direction. The sequence is that of Polyribonucleotide nucleotidyltransferase from Psychrobacter sp. (strain PRwf-1).